Reading from the N-terminus, the 711-residue chain is Hydroperoxide isomerase ALOXE3 (711 aa).

Residues Ala-2–Arg-119 form the PLAT domain. The region spanning Thr-120–Ile-711 is the Lipoxygenase domain. The Fe cation site is built by His-408, His-413, His-588, Asn-592, and Ile-711.

Belongs to the lipoxygenase family. It depends on Fe cation as a cofactor. In terms of tissue distribution, skin specific.

It is found in the cytoplasm. The enzyme catalyses a hydroperoxyeicosatetraenoate = a hydroxy-epoxy-eicosatetraenoate. It catalyses the reaction (8S)-hydroperoxy-(5Z,9E,11Z,14Z)-eicosatetraenoate = (10R)-hydroxy-(8S,9S)-epoxy-(5Z,11Z,14Z)-eicosatrienoate. It carries out the reaction (12R)-hydroperoxy-(5Z,8Z,10E,14Z)-eicosatetraenoate = (8R)-hydroxy-(11R,12R)-epoxy-(5Z,9E,14Z)-eicosatrienoate. The catalysed reaction is (12S)-hydroperoxy-(5Z,8Z,10E,14Z)-eicosatetraenoate = (8R)-hydroxy-(11S,12S)-epoxy-(5Z,9E,14Z)-eicosatrienoate. The enzyme catalyses (12S)-hydroperoxy-(5Z,8Z,10E,14Z)-eicosatetraenoate = (10R)-hydroxy-(11S,12S)-epoxy-(5Z,8Z,14Z)-eicosatrienoate. It catalyses the reaction (15S)-hydroperoxy-(5Z,8Z,11Z,13E)-eicosatetraenoate = (13R)-hydroxy-(14S,15S)-epoxy-(5Z,8Z,11Z)-eicosatrienoate. It carries out the reaction (13S)-hydroperoxy-(9Z,11E)-octadecadienoate = 11-hydroxy-(12S,13S)-epoxy-(9Z)-octadecenoate. The catalysed reaction is (5S)-hydroperoxy-(6E,8Z,11Z,14Z)-eicosatetraenoate = 7R-hydroxy-5S,6S-epoxy-(8Z,11Z,14Z)-eicosatrienoate. The enzyme catalyses N-[omega-(9R)-hydroperoxy-(10E,12Z)-octadecadienoyloxy]acyl-beta-D-glucosyl-(1&lt;-&gt;1)-octadecasphing-4E-enine = a N-[omega-(9R,10R)-epoxy-(13R)-hydroxy-(11E)-octadecenoyloxy]acyl-beta-D-glucosyl-(1&lt;-&gt;1)-sphing-4E-enine. It catalyses the reaction a N-[omega-(9R)-hydroperoxy-(10E,12Z)-octadecadienoyloxy]-acylsphin-4E-enine = a N-[omega-(9R,10R)-epoxy-(13R)-hydroxy-(11E)-octadecenoyloxy]-acylsphing-4E-enine. It carries out the reaction a hydroperoxyeicosatetraenoate = an oxoeicosatetraenoate + H2O. The catalysed reaction is (8R)-hydroperoxy-(5Z,9E,11Z,14Z)-eicosatetraenoate = 8-oxo-(5Z,9E,11Z,14Z)-eicosatetraenoate + H2O. The enzyme catalyses (8S)-hydroperoxy-(5Z,9E,11Z,14Z)-eicosatetraenoate = 8-oxo-(5Z,9E,11Z,14Z)-eicosatetraenoate + H2O. It catalyses the reaction (12R)-hydroperoxy-(5Z,8Z,10E,14Z)-eicosatetraenoate = 12-oxo-(5Z,8Z,10E,14Z)-eicosatetraenoate + H2O. It carries out the reaction (12S)-hydroperoxy-(5Z,8Z,10E,14Z)-eicosatetraenoate = 12-oxo-(5Z,8Z,10E,14Z)-eicosatetraenoate + H2O. The catalysed reaction is (15S)-hydroperoxy-(5Z,8Z,11Z,13E)-eicosatetraenoate = 15-oxo-(5Z,8Z,11Z,13E)-eicosatetraenoate + H2O. The enzyme catalyses (13S)-hydroperoxy-(9Z,11E)-octadecadienoate = 13-oxo-(9Z,11E)-octadecadienoate + H2O. Its pathway is lipid metabolism; hydroperoxy eicosatetraenoic acid biosynthesis. It participates in lipid metabolism; sphingolipid metabolism. Non-heme iron-containing lipoxygenase which is atypical in that it displays a prominent hydroperoxide isomerase activity and a reduced lipoxygenases activity. The hydroperoxide isomerase activity catalyzes the isomerization of hydroperoxides, derived from arachidonic and linoleic acid by ALOX12B, into hepoxilin-type epoxyalcohols and ketones. In presence of oxygen, oxygenates polyunsaturated fatty acids, including arachidonic acid, to produce fatty acid hydroperoxides. In the skin, acts downstream of ALOX12B on the linoleate moiety of esterified omega-hydroxyacyl-sphingosine (EOS) ceramides to produce an epoxy-ketone derivative, a crucial step in the conjugation of omega-hydroxyceramide to membrane proteins. Therefore plays a crucial role in the synthesis of corneocytes lipid envelope and the establishment of the skin barrier to water loss. In parallel, it may have a signaling function in barrier formation through the production of hepoxilins metabolites. Also plays a role in adipocyte differentiation through hepoxilin A3 and hepoxilin B3 production which in turn activate PPARG. Through the production of hepoxilins in the spinal cord, it may regulate inflammatory tactile allodynia. The chain is Hydroperoxide isomerase ALOXE3 from Mus musculus (Mouse).